Here is a 489-residue protein sequence, read N- to C-terminus: Protein MGF 505-2R (489 aa).

It belongs to the asfivirus MGF 505 family.

Its function is as follows. Plays a role in virus cell tropism, and may be required for efficient virus replication in macrophages. This Ornithodoros (relapsing fever ticks) protein is Protein MGF 505-2R.